Reading from the N-terminus, the 46-residue chain is Photosystem II reaction center protein K (46 aa).

Residues 1-9 (MIDALVLVA) constitute a propeptide that is removed on maturation. Over 10-19 (KLPEAYAIFD) the chain is Lumenal. The helical transmembrane segment at 20 to 39 (PLVDVLPVIPVLFLALAFVW) threads the bilayer. The Cytoplasmic portion of the chain corresponds to 40 to 46 (QAAVGFR).

It belongs to the PsbK family. As to quaternary structure, PSII is composed of 1 copy each of membrane proteins PsbA, PsbB, PsbC, PsbD, PsbE, PsbF, PsbH, PsbI, PsbJ, PsbK, PsbL, PsbM, PsbT, PsbX, PsbY, PsbZ, Psb30/Ycf12, peripheral proteins PsbO, CyanoQ(PsbQ), PsbU, PsbV and a large number of cofactors. It forms dimeric complexes. Part of a photosystem II (PSII) assembly intermediate complex PSII-I; crystallized from a strain deleted of psbJ, it forms monomeric PSII before addition of the oxygen evolving complex. PSII-I includes 3 assembly factors not found in mature PSII (Psb27, Psb28 and Psb34). The cofactor is PSII binds multiple chlorophylls, carotenoids and specific lipids..

It localises to the cellular thylakoid membrane. Its function is as follows. One of the components of the core complex of photosystem II (PSII). PSII is a light-driven water:plastoquinone oxidoreductase that uses light energy to abstract electrons from H(2)O, generating O(2) and a proton gradient subsequently used for ATP formation. It consists of a core antenna complex that captures photons, and an electron transfer chain that converts photonic excitation into a charge separation. Required for association of PsbZ and Psb30/Ycf12 with PSII. This chain is Photosystem II reaction center protein K, found in Thermosynechococcus vestitus (strain NIES-2133 / IAM M-273 / BP-1).